Reading from the N-terminus, the 154-residue chain is MATFSQKPAEVVKKWVLIDAEGLVVGRLASLVANRLRGKHKATFTPHVDDGDNVIIINADKVVLTGKKYTDKKYYWHTGHPGGIKERTARQILEGRFPERVLEKAIERMIPRGPLGRRQMKNLRVYAGPNHQHEAQQPEVLDVAALNRKNKGNA.

The protein belongs to the universal ribosomal protein uL13 family. As to quaternary structure, part of the 50S ribosomal subunit.

Its function is as follows. This protein is one of the early assembly proteins of the 50S ribosomal subunit, although it is not seen to bind rRNA by itself. It is important during the early stages of 50S assembly. This is Large ribosomal subunit protein uL13 from Brucella suis (strain ATCC 23445 / NCTC 10510).